A 230-amino-acid chain; its full sequence is UPF0173 metal-dependent hydrolase Sca_1312 (230 aa).

Belongs to the UPF0173 family.

This Staphylococcus carnosus (strain TM300) protein is UPF0173 metal-dependent hydrolase Sca_1312.